Consider the following 980-residue polypeptide: Thrombospondin-4 (980 aa).

A signal peptide spans 1-42 (MTMITPSSKLTLTKGNKSWSSTRCGAFLLLHLVLQPWQRAGA). A Laminin G-like domain is found at 43–210 (QATPQVFDLL…LEELKLVVRG (168 aa)). Residues 304–343 (PTRRCDSSPCFRGVRCTDTRDGFQCGPCPDGYTGNGITCS) form the EGF-like 1 domain. 21 disulfides stabilise this stretch: C308-C319, C313-C328, C331-C342, C348-C359, C353-C368, C371-C395, C401-C412, C406-C421, C424-C436, C442-C456, C450-C466, C468-C480, C496-C501, C506-C526, C542-C562, C565-C585, C601-C621, C624-C644, C662-C682, C702-C722, and C738-C959. Positions 344–381 (DVDECKYHPCYPGVRCTNLAPGFRCDACPVGFTGPMVQ) constitute an EGF-like 2; calcium-binding domain. The EGF-like 3; calcium-binding domain maps to 397–434 (DVDECRNGACVLNSICINTLGSYRCGPCKPGYTGDQTR). Residues 438 to 481 (TERSCRNPEQNPCSVHAQCIEERQGDVTCVCGVGWAGRAGYVCG) form the EGF-like 4 domain. 8 TSP type-3 repeats span residues 482-514 (KDVD…NSGQ), 515-550 (EDAD…NVDQ), 551-573 (RNTD…NNDQ), 574-609 (KDTD…NRDQ), 610-632 (QDRD…NPNQ), 633-670 (SDVD…NSAQ), 671-710 (LDTD…NPAQ), and 711-746 (EDSN…EITL). Residues 596-691 (NILDNCPRVP…CDDDDDNDGM (96 aa)) form a disordered region. Over residues 605–615 (PNRDQQDRDGD) the composition is skewed to basic and acidic residues. N-linked (GlcNAc...) asparagine glycosylation is present at N631. Positions 659–671 (TDNCPTVINSAQL) are enriched in polar residues. Acidic residues predominate over residues 679 to 690 (GDECDDDDDNDG). Residues 750 to 964 (RAYQTVVLDP…LKYRCNDTIP (215 aa)) enclose the TSP C-terminal domain. An N-linked (GlcNAc...) asparagine glycan is attached at N960.

The protein belongs to the thrombospondin family. As to quaternary structure, homopentamer; disulfide-linked. Interacts with PTBP3. Interacts (via EGF-like 3; calcium-binding domain) with ATF6 and facilitates its processing, activation and nuclear translocation. Interacts with NOTCH1. Mainly expressed in astrocytes, and in ressponse to peripheral nerve injury, significantly up-regulated in the dorsal spinal cord (at protein level).

It is found in the endoplasmic reticulum. Its subcellular location is the sarcoplasmic reticulum. The protein resides in the secreted. The protein localises to the extracellular space. It localises to the extracellular matrix. Adhesive glycoprotein that mediates cell-to-cell and cell-to-matrix interactions and is involved in various processes including cellular proliferation, migration, adhesion and attachment, inflammatory response to CNS injury, regulation of vascular inflammation and adaptive responses of the heart to pressure overload and in myocardial function and remodeling. Binds to structural extracellular matrix (ECM) proteins and modulates the ECM in response to tissue damage, contributing to cardioprotective and adaptive ECM remodeling. Plays a role in ER stress response, via its interaction with the activating transcription factor 6 alpha (ATF6) which produces adaptive ER stress response factors and protects myocardium from pressure overload. May contribute to spinal presynaptic hypersensitivity and neuropathic pain states after peripheral nerve injury. May play a role in regulating protective astrogenesis from the subventricular zone (SVZ) niche after injury in a NOTCH1-dependent manner. This chain is Thrombospondin-4 (Thbs4), found in Rattus norvegicus (Rat).